The sequence spans 396 residues: Elongation factor Tu (396 aa).

The 195-residue stretch at 11-205 folds into the tr-type G domain; the sequence is KPHVNIGTIG…TVDEYVPTPE (195 aa). A G1 region spans residues 20 to 27; the sequence is GHVDHGKT. 20 to 27 lines the GTP pocket; the sequence is GHVDHGKT. Threonine 27 serves as a coordination point for Mg(2+). The segment at 61 to 65 is G2; sequence GITIN. Positions 82 to 85 are G3; the sequence is DAPG. GTP contacts are provided by residues 82 to 86 and 137 to 140; these read DAPGH and NKTD. The interval 137–140 is G4; the sequence is NKTD. The G5 stretch occupies residues 175-177; the sequence is SAL.

Belongs to the TRAFAC class translation factor GTPase superfamily. Classic translation factor GTPase family. EF-Tu/EF-1A subfamily. Monomer.

It is found in the cytoplasm. The enzyme catalyses GTP + H2O = GDP + phosphate + H(+). In terms of biological role, GTP hydrolase that promotes the GTP-dependent binding of aminoacyl-tRNA to the A-site of ribosomes during protein biosynthesis. The protein is Elongation factor Tu of Latilactobacillus sakei subsp. sakei (strain 23K) (Lactobacillus sakei subsp. sakei).